The sequence spans 294 residues: Cytidine deaminase (294 aa).

CMP/dCMP-type deaminase domains follow at residues 48–168 and 186–294; these read DEDA…FGPK and LTGD…VLLG. 89–91 is a binding site for substrate; the sequence is NME. His-102 is a binding site for Zn(2+). The Proton donor role is filled by Glu-104. Zn(2+) contacts are provided by Cys-129 and Cys-132.

This sequence belongs to the cytidine and deoxycytidylate deaminase family. As to quaternary structure, homodimer. Zn(2+) is required as a cofactor.

The enzyme catalyses cytidine + H2O + H(+) = uridine + NH4(+). The catalysed reaction is 2'-deoxycytidine + H2O + H(+) = 2'-deoxyuridine + NH4(+). Functionally, this enzyme scavenges exogenous and endogenous cytidine and 2'-deoxycytidine for UMP synthesis. In Salmonella schwarzengrund (strain CVM19633), this protein is Cytidine deaminase.